A 266-amino-acid polypeptide reads, in one-letter code: Thymidylate synthase (266 aa).

R24 contacts dUMP. H54 is a binding site for (6R)-5,10-methylene-5,6,7,8-tetrahydrofolate. 129 to 130 (RR) contacts dUMP. The active-site Nucleophile is the C149. Residues 169 to 172 (RSAD), N180, and 210 to 212 (HIY) contribute to the dUMP site. D172 serves as a coordination point for (6R)-5,10-methylene-5,6,7,8-tetrahydrofolate. A265 provides a ligand contact to (6R)-5,10-methylene-5,6,7,8-tetrahydrofolate.

It belongs to the thymidylate synthase family. Bacterial-type ThyA subfamily. In terms of assembly, homodimer.

The protein resides in the cytoplasm. The enzyme catalyses dUMP + (6R)-5,10-methylene-5,6,7,8-tetrahydrofolate = 7,8-dihydrofolate + dTMP. It participates in pyrimidine metabolism; dTTP biosynthesis. In terms of biological role, catalyzes the reductive methylation of 2'-deoxyuridine-5'-monophosphate (dUMP) to 2'-deoxythymidine-5'-monophosphate (dTMP) while utilizing 5,10-methylenetetrahydrofolate (mTHF) as the methyl donor and reductant in the reaction, yielding dihydrofolate (DHF) as a by-product. This enzymatic reaction provides an intracellular de novo source of dTMP, an essential precursor for DNA biosynthesis. This chain is Thymidylate synthase, found in Mycobacterium sp. (strain KMS).